The chain runs to 163 residues: Protein NAG1 (163 aa).

Residues 76 to 96 (ACFSVRIVLPLSLTISISALM) traverse the membrane as a helical segment.

It is found in the membrane. Involved in yeast cell wall biogenesis. This Saccharomyces cerevisiae (strain ATCC 204508 / S288c) (Baker's yeast) protein is Protein NAG1 (NAG1).